The sequence spans 1072 residues: Carbamoyl phosphate synthase large chain (1072 aa).

The carboxyphosphate synthetic domain stretch occupies residues 1 to 401; sequence MPKRLDINTI…SLLKAVRSLE (401 aa). ATP-binding residues include arginine 129, arginine 169, glycine 175, glycine 176, lysine 208, isoleucine 210, glutamate 215, glycine 241, valine 242, histidine 243, glutamine 284, and glutamate 298. The region spanning 133-327 is the ATP-grasp 1 domain; it reads RTLMQELNEP…IAKLAAKIAV (195 aa). Mg(2+)-binding residues include glutamine 284, glutamate 298, and asparagine 300. Mn(2+) contacts are provided by glutamine 284, glutamate 298, and asparagine 300. The tract at residues 402–546 is oligomerization domain; the sequence is LGIYHLELDH…YSTYADENES (145 aa). The carbamoyl phosphate synthetic domain stretch occupies residues 547 to 929; it reads IVTDRKSVVV…ALYKGLVASG (383 aa). The region spanning 671–861 is the ATP-grasp 2 domain; the sequence is EAALTKLGIP…MANVATKVIL (191 aa). Arginine 707, arginine 746, glutamate 752, glycine 777, valine 778, histidine 779, serine 780, glutamine 820, and glutamate 832 together coordinate ATP. Mg(2+)-binding residues include glutamine 820, glutamate 832, and asparagine 834. Mn(2+) is bound by residues glutamine 820, glutamate 832, and asparagine 834. An MGS-like domain is found at 930-1072; that stretch reads INIPTHGSVI…QTKRHEVVHA (143 aa). An allosteric domain region spans residues 930–1072; it reads INIPTHGSVI…QTKRHEVVHA (143 aa).

This sequence belongs to the CarB family. As to quaternary structure, composed of two chains; the small (or glutamine) chain promotes the hydrolysis of glutamine to ammonia, which is used by the large (or ammonia) chain to synthesize carbamoyl phosphate. Tetramer of heterodimers (alpha,beta)4. It depends on Mg(2+) as a cofactor. Mn(2+) serves as cofactor.

It carries out the reaction hydrogencarbonate + L-glutamine + 2 ATP + H2O = carbamoyl phosphate + L-glutamate + 2 ADP + phosphate + 2 H(+). The enzyme catalyses hydrogencarbonate + NH4(+) + 2 ATP = carbamoyl phosphate + 2 ADP + phosphate + 2 H(+). The protein operates within amino-acid biosynthesis; L-arginine biosynthesis; carbamoyl phosphate from bicarbonate: step 1/1. It participates in pyrimidine metabolism; UMP biosynthesis via de novo pathway; (S)-dihydroorotate from bicarbonate: step 1/3. Its function is as follows. Large subunit of the glutamine-dependent carbamoyl phosphate synthetase (CPSase). CPSase catalyzes the formation of carbamoyl phosphate from the ammonia moiety of glutamine, carbonate, and phosphate donated by ATP, constituting the first step of 2 biosynthetic pathways, one leading to arginine and/or urea and the other to pyrimidine nucleotides. The large subunit (synthetase) binds the substrates ammonia (free or transferred from glutamine from the small subunit), hydrogencarbonate and ATP and carries out an ATP-coupled ligase reaction, activating hydrogencarbonate by forming carboxy phosphate which reacts with ammonia to form carbamoyl phosphate. This chain is Carbamoyl phosphate synthase large chain, found in Bacillus thuringiensis (strain Al Hakam).